A 141-amino-acid chain; its full sequence is NADPH-dependent 7-cyano-7-deazaguanine reductase (141 aa).

Cys-56 serves as the catalytic Thioimide intermediate. Residue Asp-63 is the Proton donor of the active site. Substrate is bound by residues Val-78 to Leu-80 and His-97 to Glu-98.

It belongs to the GTP cyclohydrolase I family. QueF type 1 subfamily.

Its subcellular location is the cytoplasm. The enzyme catalyses 7-aminomethyl-7-carbaguanine + 2 NADP(+) = 7-cyano-7-deazaguanine + 2 NADPH + 3 H(+). The protein operates within tRNA modification; tRNA-queuosine biosynthesis. Catalyzes the NADPH-dependent reduction of 7-cyano-7-deazaguanine (preQ0) to 7-aminomethyl-7-deazaguanine (preQ1). This is NADPH-dependent 7-cyano-7-deazaguanine reductase from Trichodesmium erythraeum (strain IMS101).